The sequence spans 142 residues: Protein spalt-accessory (142 aa).

Residues 1–16 (MKLLIALFVLVNAVIA) form the signal peptide. Residues 65–77 (GQGGVSPGQGGFA) show a composition bias toward gly residues. The interval 65 to 142 (GQGGVSPGQG…HHEHHGHHRH (78 aa)) is disordered. Basic and acidic residues predominate over residues 112-124 (NHHEYPEHHGDHH). Over residues 125 to 142 (REHHEHHGHHEHHGHHRH) the composition is skewed to basic residues.

It localises to the secreted. Functionally, likely to be involved in the establishment of the head. This chain is Protein spalt-accessory (sala), found in Drosophila orena (Fruit fly).